The sequence spans 634 residues: 1-deoxy-D-xylulose-5-phosphate synthase (634 aa).

Thiamine diphosphate is bound by residues histidine 72 and 113–115 (GHS). Residue aspartate 144 participates in Mg(2+) binding. Thiamine diphosphate contacts are provided by residues 145–146 (GA), asparagine 173, tyrosine 284, and glutamate 367. Asparagine 173 is a binding site for Mg(2+).

This sequence belongs to the transketolase family. DXPS subfamily. In terms of assembly, homodimer. Requires Mg(2+) as cofactor. It depends on thiamine diphosphate as a cofactor.

The catalysed reaction is D-glyceraldehyde 3-phosphate + pyruvate + H(+) = 1-deoxy-D-xylulose 5-phosphate + CO2. It functions in the pathway metabolic intermediate biosynthesis; 1-deoxy-D-xylulose 5-phosphate biosynthesis; 1-deoxy-D-xylulose 5-phosphate from D-glyceraldehyde 3-phosphate and pyruvate: step 1/1. Its function is as follows. Catalyzes the acyloin condensation reaction between C atoms 2 and 3 of pyruvate and glyceraldehyde 3-phosphate to yield 1-deoxy-D-xylulose-5-phosphate (DXP). This chain is 1-deoxy-D-xylulose-5-phosphate synthase, found in Listeria welshimeri serovar 6b (strain ATCC 35897 / DSM 20650 / CCUG 15529 / CIP 8149 / NCTC 11857 / SLCC 5334 / V8).